Consider the following 197-residue polypeptide: Phospholipid hydroperoxide glutathione peroxidase (197 aa).

Position 40 is a phosphoserine (Ser-40). Residue Sec-73 is part of the active site. Position 73 (Sec-73) is a non-standard amino acid, selenocysteine.

The protein belongs to the glutathione peroxidase family. In terms of assembly, monomer. Has a tendency to form higher mass oligomers. Interacts with FUNDC1; this interaction promotes GPX4 recruitment into mitochondria through TOM/TIM complex where it is degraded by mitophagy. As to expression, expressed in testis. Also expressed in liver, lung, kidney and spinal cord.

The protein resides in the mitochondrion. Its subcellular location is the cytoplasm. The enzyme catalyses a hydroperoxy polyunsaturated fatty acid + 2 glutathione = a hydroxy polyunsaturated fatty acid + glutathione disulfide + H2O. The catalysed reaction is 2 glutathione + H2O2 = glutathione disulfide + 2 H2O. It carries out the reaction tert-butyl hydroperoxide + 2 glutathione = tert-butanol + glutathione disulfide + H2O. It catalyses the reaction cumene hydroperoxide + 2 glutathione = 2-phenylpropan-2-ol + glutathione disulfide + H2O. The enzyme catalyses (9S)-hydroperoxy-(10E,12Z)-octadecadienoate + 2 glutathione = (9S)-hydroxy-(10E,12Z)-octadecadienoate + glutathione disulfide + H2O. The catalysed reaction is (13S)-hydroperoxy-(9Z,11E)-octadecadienoate + 2 glutathione = (13S)-hydroxy-(9Z,11E)-octadecadienoate + glutathione disulfide + H2O. It carries out the reaction (5S)-hydroperoxy-(6E,8Z,11Z,14Z)-eicosatetraenoate + 2 glutathione = (5S)-hydroxy-(6E,8Z,11Z,14Z)-eicosatetraenoate + glutathione disulfide + H2O. It catalyses the reaction (12R)-hydroperoxy-(5Z,8Z,10E,14Z)-eicosatetraenoate + 2 glutathione = (12R)-hydroxy-(5Z,8Z,10E,14Z)-eicosatetraenoate + glutathione disulfide + H2O. The enzyme catalyses (12S)-hydroperoxy-(5Z,8Z,10E,14Z)-eicosatetraenoate + 2 glutathione = (12S)-hydroxy-(5Z,8Z,10E,14Z)-eicosatetraenoate + glutathione disulfide + H2O. The catalysed reaction is (15S)-hydroperoxy-(5Z,8Z,11Z,13E)-eicosatetraenoate + 2 glutathione = (15S)-hydroxy-(5Z,8Z,11Z,13E)-eicosatetraenoate + glutathione disulfide + H2O. It carries out the reaction (5S)-hydroperoxy-(6E,8Z,11Z,14Z,17Z)-eicosapentaenoate + 2 glutathione = (5S)-hydroxy-(6E,8Z,11Z,14Z,17Z)-eicosapentaenoate + glutathione disulfide + H2O. It catalyses the reaction (12S)-hydroperoxy-(5Z,8Z,10E,14Z,17Z)-eicosapentaenoate + 2 glutathione = (12S)-hydroxy-(5Z,8Z,10E,14Z,17Z)-eicosapentaenoate + glutathione disulfide + H2O. The enzyme catalyses (15S)-hydroperoxy-(5Z,8Z,11Z,13E,17Z)-eicosapentaenoate + 2 glutathione = (15S)-hydroxy-(5Z,8Z,11Z,13E,17Z)-eicosapentaenoate + glutathione disulfide + H2O. The catalysed reaction is (15S)-hydroperoxy-(11Z,13E)-eicosadienoate + 2 glutathione = (15S)-hydroxy-(11Z,13E)-eicosadienoate + glutathione disulfide + H2O. It carries out the reaction (17S)-hydroperoxy-(4Z,7Z,10Z,13Z,15E,19Z)-docosahexaenoate + 2 glutathione = (17S)-hydroxy-(4Z,7Z,10Z,13Z,15E,19Z)-docosahexaenoate + glutathione disulfide + H2O. It catalyses the reaction a hydroperoxy-1,2-diacyl-glycero-3-phosphocholine + 2 glutathione = a hydroxy-1,2-diacyl-glycero-3-phosphocholine + glutathione disulfide + H2O. Essential antioxidant peroxidase that directly reduces phospholipid hydroperoxide even if they are incorporated in membranes and lipoproteins. Can also reduce fatty acid hydroperoxide, cholesterol hydroperoxide and thymine hydroperoxide. Plays a key role in protecting cells from oxidative damage by preventing membrane lipid peroxidation. Required to prevent cells from ferroptosis, a non-apoptotic cell death resulting from an iron-dependent accumulation of lipid reactive oxygen species. The presence of selenocysteine (Sec) versus Cys at the active site is essential for life: it provides resistance to overoxidation and prevents cells against ferroptosis. The presence of Sec at the active site is also essential for the survival of a specific type of parvalbumin-positive interneurons, thereby preventing against fatal epileptic seizures. May be required to protect cells from the toxicity of ingested lipid hydroperoxides. Required for normal sperm development and male fertility. Essential for maturation and survival of photoreceptor cells. Plays a role in a primary T-cell response to viral and parasitic infection by protecting T-cells from ferroptosis and by supporting T-cell expansion. Plays a role of glutathione peroxidase in platelets in the arachidonic acid metabolism. Reduces hydroperoxy ester lipids formed by a 15-lipoxygenase that may play a role as down-regulator of the cellular 15-lipoxygenase pathway. Can also reduce small soluble hydroperoxides such as H2O2, cumene hydroperoxide and tert-butyl hydroperoxide. This is Phospholipid hydroperoxide glutathione peroxidase from Callithrix jacchus (White-tufted-ear marmoset).